The following is a 184-amino-acid chain: Endoribonuclease YbeY (184 aa).

Zn(2+) contacts are provided by His-151, His-155, and His-161.

It belongs to the endoribonuclease YbeY family. The cofactor is Zn(2+).

The protein localises to the cytoplasm. Functionally, single strand-specific metallo-endoribonuclease involved in late-stage 70S ribosome quality control and in maturation of the 3' terminus of the 16S rRNA. In Prochlorococcus marinus (strain NATL2A), this protein is Endoribonuclease YbeY.